A 70-amino-acid polypeptide reads, in one-letter code: MTKPTKDDELYREMCRVVGKVVLEMRDLGQEPKYIVIAGVLRTALANQRIQRSALEKQAMETVINALARS.

This sequence belongs to the FumD family.

The catalysed reaction is (S)-malate = fumarate + H2O. Functionally, in vitro catalyzes the addition of water to fumarate, forming malate. Cannot catalyze the reverse reaction. Cannot use the cis-isomer maleate as substrate. The sequence is that of Fumarase D from Salmonella typhi.